The primary structure comprises 88 residues: Phosphocarrier protein HPr (88 aa).

An HPr domain is found at 1-88 (MASKEFHIVV…ETMTKEGLAE (88 aa)). H15 (pros-phosphohistidine intermediate) is an active-site residue. S46 is subject to Phosphoserine; by HPrK/P.

Belongs to the HPr family.

It is found in the cytoplasm. With respect to regulation, phosphorylation on Ser-46 inhibits the phosphoryl transfer from enzyme I to HPr. Functionally, general (non sugar-specific) component of the phosphoenolpyruvate-dependent sugar phosphotransferase system (sugar PTS). This major carbohydrate active-transport system catalyzes the phosphorylation of incoming sugar substrates concomitantly with their translocation across the cell membrane. The phosphoryl group from phosphoenolpyruvate (PEP) is transferred to the phosphoryl carrier protein HPr by enzyme I. Phospho-HPr then transfers it to the PTS EIIA domain. P-Ser-HPr interacts with the catabolite control protein A (CcpA), forming a complex that binds to DNA at the catabolite response elements cre, operator sites preceding a large number of catabolite-regulated genes. Thus, P-Ser-HPr is a corepressor in carbon catabolite repression (CCR), a mechanism that allows bacteria to coordinate and optimize the utilization of available carbon sources. P-Ser-HPr also plays a role in inducer exclusion, in which it probably interacts with several non-PTS permeases and inhibits their transport activity. The chain is Phosphocarrier protein HPr (ptsH) from Lactococcus lactis subsp. lactis (strain IL1403) (Streptococcus lactis).